The sequence spans 242 residues: Tyrosine recombinase XerD-like (242 aa).

One can recognise a Core-binding (CB) domain in the interval methionine 1 to tyrosine 71. In terms of domain architecture, Tyr recombinase spans glutamate 90–arginine 242. Catalysis depends on residues lysine 148 and arginine 209. Tyrosine 241 serves as the catalytic O-(3'-phospho-DNA)-tyrosine intermediate.

It belongs to the 'phage' integrase family. XerD-like subfamily.

It localises to the cytoplasm. In terms of biological role, putative tyrosine recombinase. Not involved in the cutting and rejoining of the recombining DNA molecules on dif(SL) site. In Streptococcus gordonii (strain Challis / ATCC 35105 / BCRC 15272 / CH1 / DL1 / V288), this protein is Tyrosine recombinase XerD-like.